A 214-amino-acid polypeptide reads, in one-letter code: 3-isopropylmalate dehydratase small subunit (214 aa).

Belongs to the LeuD family. LeuD type 1 subfamily. In terms of assembly, heterodimer of LeuC and LeuD.

It catalyses the reaction (2R,3S)-3-isopropylmalate = (2S)-2-isopropylmalate. It participates in amino-acid biosynthesis; L-leucine biosynthesis; L-leucine from 3-methyl-2-oxobutanoate: step 2/4. In terms of biological role, catalyzes the isomerization between 2-isopropylmalate and 3-isopropylmalate, via the formation of 2-isopropylmaleate. The sequence is that of 3-isopropylmalate dehydratase small subunit from Nitrosococcus oceani (strain ATCC 19707 / BCRC 17464 / JCM 30415 / NCIMB 11848 / C-107).